A 541-amino-acid chain; its full sequence is Transcription factor STP2 (541 aa).

Positions 13-32 (VLTRIYDYLKALVQQVIVPN) are i. The disordered stretch occupies residues 35-58 (DDKSSKSTPFEKLEPAKQNHPQKD). The segment at 73–105 (LFPKQNNKQLSLTSKSSVVPCALNLDNLETPFS) is II. Residues 204-226 (YICHYCDARFRIRGYLTRHIKKH) form a C2H2-type 1 zinc finger. The C2H2-type 2; atypical zinc finger occupies 232–267 (YHCPFFDNSISQELRCHTSGGFSRRDTYKTHLKSRH). The C2H2-type 3; atypical zinc-finger motif lies at 284-309 (GVCTQCGEHFSTSESWVENHIEAGSC). The segment covering 452–462 (SSASSALSPLS) has biased composition (low complexity). The tract at residues 452-497 (SSASSALSPLSGDPITTTETNKSYPLDSEQSLLEPDKTEEDAINQS) is disordered. Residues 465–482 (PITTTETNKSYPLDSEQS) are compositionally biased toward polar residues.

In terms of assembly, interacts (via Region II) with SSY5; protease component of the SPS-sensor. Post-translationally, activated by the amino acid-induced proteolytic removal of an N-terminal inhibitory domain by serine protease SSY5, an intrinsic component of the SPS-sensor. Processing requires at least 2 components of the SCF(GRR1) ubiquitin ligase complex, namely the F-box protein GRR1 and the E2 enzyme CDC34, but does not depend on the proteasome. Processing is negatively regulated by the protein phosphatase 2A regulatory subunit RTS1.

The protein resides in the cell membrane. It is found in the nucleus. In terms of biological role, transcription factor involved in the regulation of gene expression in response to extracellular amino acid levels. Synthesized as latent cytoplasmic precursor, which, upon a signal initiated by the plasma membrane SPS (SSY1-PTR3-SSY5) amino acid sensor system, becomes proteolytically activated and relocates to the nucleus, where it induces the expression of SPS-sensor-regulated genes, including the amino-acid permeases BAP2 and BAP3. Binding to promoters is facilitated by DAL81. Involved in the repression of genes subject to nitrogen catabolite repression and genes involved in stress response. Negatively regulated by inner nuclear membrane proteins ASI1, ASI2 and ASI3, which prevent unprocessed precursor forms that escape cytoplasmic anchoring from inducing SPS-sensor-regulated genes. This Saccharomyces cerevisiae (strain ATCC 204508 / S288c) (Baker's yeast) protein is Transcription factor STP2 (STP2).